We begin with the raw amino-acid sequence, 98 residues long: Envelope glycoprotein N (98 aa).

Positions 1-24 (MVSSAGLSLTLVAALCALVAPALS) are cleaved as a signal peptide. The Virion surface portion of the chain corresponds to 25–60 (SIVSTEGPLPLLREESRINFWNAACAARGVPVDQPT). A helical membrane pass occupies residues 61 to 81 (AAAVTFYICLLAVLVVALGYA). Topologically, residues 82–98 (TRTCTRMLHASPAGRRV) are intravirion.

Belongs to the herpesviridae glycoprotein N family. In terms of assembly, interacts (via N-terminus) with gM (via N-terminus). The gM-gN heterodimer forms the gCII complex. Post-translationally, O-glycosylated.

It is found in the virion membrane. The protein resides in the host membrane. The protein localises to the host Golgi apparatus. Its subcellular location is the host trans-Golgi network. Its function is as follows. Envelope glycoprotein necessary for proper maturation of gM and modulation of its membrane fusion activity. Also plays a critical role in virion morphogenesis. This chain is Envelope glycoprotein N, found in Suid herpesvirus 1 (SuHV-1).